The chain runs to 858 residues: Rho GTPase-activating protein 17 (858 aa).

One can recognise a BAR domain in the interval 14–246 (QTVGRAEKTE…MRAHQDKWAE (233 aa)). One can recognise a Rho-GAP domain in the interval 252–442 (TPLEEHLKRS…PIIQHADWFF (191 aa)). The segment covering 459–475 (TPNSNHSSHTGNDSDSG) has biased composition (polar residues). Positions 459–482 (TPNSNHSSHTGNDSDSGTLERKRP) are disordered. The residue at position 484 (Ser484) is a Phosphoserine. A disordered region spans residues 516 to 823 (RKHISPAFQP…VTDTNSRVSE (308 aa)). Positions 543–552 (PSQSSRADSN) are enriched in polar residues. Residues 553 to 563 (SVGGPVPSSSG) show a composition bias toward low complexity. Residue Ser575 is modified to Phosphoserine. The segment covering 592–617 (RNSNQITTVPNQAQTGGNSHQLSVGT) has biased composition (polar residues). Over residues 637-650 (APAPPKPGNPPPGH) the composition is skewed to pro residues. Residues 653–702 (GQSSPGTGTSPKPSTRSPSPPQQQQQQQQQQQQQQQQQQQQQQQQQQQQQ) are compositionally biased toward low complexity. 2 positions are modified to phosphoserine: Ser710 and Ser712. 2 stretches are compositionally biased toward pro residues: residues 716-729 (IQAP…PPTQ) and 738-756 (EPGP…PPPA). Residues Thr742, Thr746, and Thr748 each carry the phosphothreonine modification. An SH3-binding motif is present at residues 742 to 755 (TPPQTPTPPSTPPP). Ser751 is subject to Phosphoserine. At Thr752 the chain carries Phosphothreonine. Residues 757–769 (KQNSSQSETTQLH) are compositionally biased toward polar residues. Over residues 784–794 (RPSVPPPPNPP) the composition is skewed to pro residues. Residues 806–823 (SVPTASRIVTDTNSRVSE) show a composition bias toward polar residues.

In terms of assembly, component of a complex whose core is composed of ARHGAP17, AMOT, PALS1, PATJ and PARD3/PAR3. Interacts with NHERF1, FNBP1, TRIP10, CAPZA (CAPZA1, CAPZA2 or CAPZA3), CAPZB, CD2AP and SH3KBP1/CIN85. Highly expressed in brain; neuron-specific (at protein level). Isoform 2, isoform 3 and isoform 4 are predominantly expressed in neuronal tissues and correlate well with the differentiation of neurons, while isoform 1 is strongly expressed in embryonic brain.

It is found in the membrane. Its subcellular location is the cytoplasm. The protein localises to the cell junction. The protein resides in the tight junction. Functionally, rho GTPase-activating protein involved in the maintenance of tight junction by regulating the activity of CDC42, thereby playing a central role in apical polarity of epithelial cells. Specifically acts as a GTPase activator for the CDC42 GTPase by converting it to an inactive GDP-bound state. The complex formed with AMOT acts by regulating the uptake of polarity proteins at tight junctions, possibly by deciding whether tight junction transmembrane proteins are recycled back to the plasma membrane or sent elsewhere. Participates in the Ca(2+)-dependent regulation of exocytosis, possibly by catalyzing GTPase activity of Rho family proteins and by inducing the reorganization of the cortical actin filaments. Acts as a GTPase activator in vitro for RAC1. The sequence is that of Rho GTPase-activating protein 17 (Arhgap17) from Rattus norvegicus (Rat).